Here is a 612-residue protein sequence, read N- to C-terminus: PAN2-PAN3 deadenylation complex subunit PAN3 (612 aa).

Residues 10-39 form a C3H1-type zinc finger; the sequence is WAKDTPCKNITIYGYCKYENDGCIFNHGKP. Residues 44–62 are compositionally biased toward low complexity; that stretch reads SNTGGAAAGSAEDSAASGG. Positions 44 to 64 are disordered; the sequence is SNTGGAAAGSAEDSAASGGVT. 2 short sequence motifs (PABPC-interacting motif-2 (PAM-2)) span residues 84 to 104 and 111 to 131; these read SVAI…IVSS and TAFT…SANV. Positions 231–481 are pseudokinase domain; the sequence is QVFPSDGNLP…TIAEFTALFS (251 aa). ATP-binding positions include Arg-286, 336–343, and 389–390; these read DYYPQSNS and DK. A coiled-coil region spans residues 482-520; the sequence is HKMLDIISSSQTYSEYIEQHLSRELENGRLFRLMCKLNF. Residues 521-612 form a knob domain region; the sequence is IFGRMESSMD…IDSTFRSMTQ (92 aa).

It belongs to the protein kinase superfamily. PAN3 family. In terms of assembly, homodimer. Forms a heterotrimer with a catalytic subunit PAN2 to form the poly(A)-nuclease (PAN) deadenylation complex. Interacts (via PAM-2 motif) with poly(A)-binding protein PAB1 (via PABC domain), conferring substrate specificity of the enzyme complex.

It localises to the cytoplasm. In terms of biological role, regulatory subunit of the poly(A)-nuclease (PAN) deadenylation complex, one of two cytoplasmic mRNA deadenylases involved in mRNA turnover. PAN specifically shortens poly(A) tails of RNA and the activity is stimulated by poly(A)-binding protein PAB1. PAN deadenylation is followed by rapid degradation of the shortened mRNA tails by the CCR4-NOT complex. Deadenylated mRNAs are then degraded by two alternative mechanisms, namely exosome-mediated 3'-5' exonucleolytic degradation, or deadenylation-dependent mRNA decaping and subsequent 5'-3' exonucleolytic degradation by XRN1. May also be involved in post-transcriptional maturation of mRNA poly(A) tails. PAN3 acts as a positive regulator for PAN activity, recruiting the catalytic subunit PAN2 to mRNA via its interaction with RNA and with PAB1. This chain is PAN2-PAN3 deadenylation complex subunit PAN3, found in Eremothecium gossypii (strain ATCC 10895 / CBS 109.51 / FGSC 9923 / NRRL Y-1056) (Yeast).